We begin with the raw amino-acid sequence, 156 residues long: Protein CROC-4 (156 aa).

Positions 46–71 (RATSSTTDSSRAPSSPRPPGSTSHCG) are disordered. Positions 48–59 (TSSTTDSSRAPS) are enriched in low complexity.

As to expression, expressed throughout the brain in the thalamus, subthalamic nucleus, corpus callosum, hippocampus, substantia nigra, caudate nucleus, and amygdala.

The protein resides in the nucleus. Functionally, may play a role in FOS signaling pathways involved in development and remodeling of neurons. Promotes transcription of the FOS promoter. The polypeptide is Protein CROC-4 (Homo sapiens (Human)).